The following is a 224-amino-acid chain: Heme response regulator HssR (224 aa).

In terms of domain architecture, Response regulatory spans 3–116 (NCLIVDDDKK…ELLFRIKAVL (114 aa)). Position 52 is a 4-aspartylphosphate (Asp-52). Residues 124–222 (DNELQLGNLI…VRGQGYRVDQ (99 aa)) constitute a DNA-binding region (ompR/PhoB-type).

In terms of processing, phosphorylated by HssS.

It localises to the cytoplasm. In terms of biological role, member of the two-component regulatory system HssS/HssR involved in intracellular heme homeostasis and tempering of staphylococcal virulence. Phosphorylated HssR binds to a direct repeat sequence within hrtAB promoter and activates the expression of hrtAB, an efflux pump, in response to extracellular heme, hemin, hemoglobin or blood. The polypeptide is Heme response regulator HssR (hssR) (Staphylococcus epidermidis (strain ATCC 12228 / FDA PCI 1200)).